The sequence spans 286 residues: tRNA(Ile)-lysidine synthase (286 aa).

7–12 provides a ligand contact to ATP; it reads SGGPDS.

This sequence belongs to the tRNA(Ile)-lysidine synthase family.

It localises to the cytoplasm. It catalyses the reaction cytidine(34) in tRNA(Ile2) + L-lysine + ATP = lysidine(34) in tRNA(Ile2) + AMP + diphosphate + H(+). Its function is as follows. Ligates lysine onto the cytidine present at position 34 of the AUA codon-specific tRNA(Ile) that contains the anticodon CAU, in an ATP-dependent manner. Cytidine is converted to lysidine, thus changing the amino acid specificity of the tRNA from methionine to isoleucine. The polypeptide is tRNA(Ile)-lysidine synthase (Mycoplasmopsis pulmonis (strain UAB CTIP) (Mycoplasma pulmonis)).